The chain runs to 218 residues: Protein P9 (218 aa).

Its subcellular location is the virion membrane. This chain is Protein P9 (IX), found in Pseudoalteromonas espejiana (Bacteriophage PM2).